The primary structure comprises 952 residues: Pentatricopeptide repeat-containing protein At5g04810, chloroplastic (952 aa).

The N-terminal 60 residues, 1–60 (MDNGGSVLSLSAPHFPYSATILRRHSPVASISFSLKQPPPQPPEPPESPPDLRRPEKSIG), are a transit peptide targeting the chloroplast. 2 disordered regions span residues 30-95 (SISF…VSPL) and 115-163 (LRLS…EFRQ). Residues 37–49 (QPPPQPPEPPESP) show a composition bias toward pro residues. Residues 58–68 (SIGSSSSSSSP) show a composition bias toward low complexity. Residues 122 to 133 (SPPPPPPPPPPV) show a composition bias toward pro residues. The segment covering 137-163 (TQFRDEFRSDTKPPEEETRNPQQEFRQ) has biased composition (basic and acidic residues). The region spanning 167–238 (IFVGNLPTWI…VEFHGRILTV (72 aa)) is the RRM domain. Positions 259–280 (EGEEDTKMSNKSSWHQEREGSR) are enriched in basic and acidic residues. The segment at 259-281 (EGEEDTKMSNKSSWHQEREGSRK) is disordered. PPR repeat units follow at residues 308–342 (SRTEFGLMVKFYGRRGDMHRARETFERMRARGITP), 343–377 (TSRIYTSLIHAYAVGRDMDEALSCVRKMKEEGIEM), 378–412 (SLVTYSVIVGGFSKAGHAEAADYWFDEAKRIHKTL), 413–447 (NASIYGKIIYAHCQTCNMERAEALVREMEEEGIDA), 448–482 (PIAIYHTMMDGYTMVADEKKGLVVFKRLKECGFTP), 483–517 (TVVTYGCLINLYTKVGKISKALEVSRVMKEEGVKH), 518–552 (NLKTYSMMINGFVKLKDWANAFAVFEDMVKEGMKP), 553–587 (DVILYNNIISAFCGMGNMDRAIQTVKEMQKLRHRP), 588–622 (TTRTFMPIIHGYAKSGDMRRSLEVFDMMRRCGCVP), 623–657 (TVHTFNGLINGLVEKRQMEKAVEILDEMTLAGVSA), 658–692 (NEHTYTKIMQGYASVGDTGKAFEYFTRLQNEGLDV), 693–727 (DIFTYEALLKACCKSGRMQSALAVTKEMSARNIPR), 728–762 (NSFVYNILIDGWARRGDVWEAADLIQQMKKEGVKP), 763–797 (DIHTYTSFISACSKAGDMNRATQTIEEMEALGVKP), and 798–832 (NIKTYTTLIKGWARASLPEKALSCYEEMKAMGIKP). The tract at residues 918-952 (DQVSDVDSDEDDVDGEDGEDDEDVNSVSDLLSPYK) is disordered. Over residues 921–941 (SDVDSDEDDVDGEDGEDDEDV) the composition is skewed to acidic residues.

It belongs to the PPR family. P subfamily.

The protein localises to the plastid. The protein resides in the chloroplast. In terms of biological role, may play a role in the plastid ribosome biogenesis. This Arabidopsis thaliana (Mouse-ear cress) protein is Pentatricopeptide repeat-containing protein At5g04810, chloroplastic (PPR4).